The chain runs to 476 residues: PRAME family member 5 (476 aa).

The stretch at 97–124 is one LRR 1; degenerate repeat; that stretch reads RWKLQVLDLQDVCENFWMVWSEAMAHGC. An LRR 2; degenerate repeat occupies 179–203; sequence HLCCKKLKILGMPFRNIRSILKMVN. An LRR 3; degenerate repeat occupies 204 to 230; the sequence is LDCIQEVEVNCKWVLPILTQFTPYLGH. The LRR 4; degenerate repeat unit spans residues 231–266; sequence MRNLQKLVLSHMDVSRYVSPEQKKEIVTQFTTQFLK. LRR repeat units lie at residues 267–292, 293–324, 325–345, 349–376, and 377–401; these read LCCL…LSCL, KTSL…SQLK, TLDL…QILL, AATL…ALSR, and CFEL…LLSH.

Belongs to the PRAME family.

The protein is PRAME family member 5 of Homo sapiens (Human).